A 125-amino-acid polypeptide reads, in one-letter code: Large ribosomal subunit protein bL12 (125 aa).

It belongs to the bacterial ribosomal protein bL12 family. In terms of assembly, homodimer. Part of the ribosomal stalk of the 50S ribosomal subunit. Forms a multimeric L10(L12)X complex, where L10 forms an elongated spine to which 2 to 4 L12 dimers bind in a sequential fashion. Binds GTP-bound translation factors.

Functionally, forms part of the ribosomal stalk which helps the ribosome interact with GTP-bound translation factors. Is thus essential for accurate translation. This chain is Large ribosomal subunit protein bL12, found in Afipia carboxidovorans (strain ATCC 49405 / DSM 1227 / KCTC 32145 / OM5) (Oligotropha carboxidovorans).